An 874-amino-acid chain; its full sequence is MKTSELRQKFLKFFETKGHTVVRSSSLVPHDDPTLLFTNAGMNQFKDVFLGFDKRPYSRATTAQKCVRAGGKHNDLENVGYTARHHTFFEMMGNFSFGDYFKRDAIHFAWEFLTSPEWLNIPKDKLLATVYAEDDEAYNIWLNEIGMPSERIVRIGDNKGAKYASDNFWQMGDTGPCGPCSEIFYDHGKEIWGGIPGSPEEDGDRWIEIWNCVFMQFNRDEQGNMNPLPKPSVDTGMGLERMAAVMQHVHSNYEIDLFQDLLKAVARETGAPFSMEEPSLKVIADHIRSCSFLIADGVLPSNEGRGYVLRRIIRRAVRHGYKLGQSKPFFHKLVADLVQEMGGAYPELKEKQAQIEEALKNEESRFAQTLETGMALLENALAKGGKTLGGEIIFKLYDTYGFPYDLTADICRERNIEPDEAGFEREMEAQRARARAAQSFKANAQLPYDGQDTEFKGYSERQTESKVLALYKDGEQVVELNEGDSGAVVIDFTPFYAESGGQVGDVGYIFAGENRFEVRDTQKIKAAVFGQFGVQTSGRLKVGDSITAKVDDEIRNANMRNHSATHLMHKALRDVLGGHVEQKGSLVTAESTRFDISHPQAVTAEEIAEVERRVNEAILANVAVNAAIMSMEDAQKTDAMMLFGEKYGDEVRVLQMGGFSTELCGGTHVSRTGDIGLFKIISEGGIAAGVRRIEAITGLNALKWAQEQERLVKDIIAETKAQTEKDVLAKIQAGAAHAKALEKELARAKAELAVHAGAKLLDDAKDLGAAKLVAAQIEADAAALRETVTDLTGKSDNAVILLAAVNEGKVSLCAGVSKALTGKVKAGDLVKFAAEQVGGKGGGRPDLAQAGGTDADKLPEMLASAEGWLCQKLS.

Residues histidine 562, histidine 566, cysteine 664, and histidine 668 each contribute to the Zn(2+) site.

It belongs to the class-II aminoacyl-tRNA synthetase family. Zn(2+) is required as a cofactor.

It is found in the cytoplasm. It catalyses the reaction tRNA(Ala) + L-alanine + ATP = L-alanyl-tRNA(Ala) + AMP + diphosphate. In terms of biological role, catalyzes the attachment of alanine to tRNA(Ala) in a two-step reaction: alanine is first activated by ATP to form Ala-AMP and then transferred to the acceptor end of tRNA(Ala). Also edits incorrectly charged Ser-tRNA(Ala) and Gly-tRNA(Ala) via its editing domain. In Neisseria gonorrhoeae (strain ATCC 700825 / FA 1090), this protein is Alanine--tRNA ligase.